We begin with the raw amino-acid sequence, 392 residues long: Glutamate 5-kinase (392 aa).

Position 17 (K17) interacts with ATP. The substrate site is built by S57, D144, and N156. Position 176–177 (176–177) interacts with ATP; that stretch reads SD. Residues 282-359 enclose the PUA domain; the sequence is AGILSVDAGA…AEIEALLGYA (78 aa). Positions 373–392 are disordered; it reads TEQTGRKAGKSTKKKDEAHA.

The protein belongs to the glutamate 5-kinase family.

It localises to the cytoplasm. It catalyses the reaction L-glutamate + ATP = L-glutamyl 5-phosphate + ADP. It participates in amino-acid biosynthesis; L-proline biosynthesis; L-glutamate 5-semialdehyde from L-glutamate: step 1/2. Functionally, catalyzes the transfer of a phosphate group to glutamate to form L-glutamate 5-phosphate. The chain is Glutamate 5-kinase from Allorhizobium ampelinum (strain ATCC BAA-846 / DSM 112012 / S4) (Agrobacterium vitis (strain S4)).